Here is a 625-residue protein sequence, read N- to C-terminus: MNAAPTVLQQQAQSLSEAVTQPIPGSRKIFVRGSRADLQVPMREIALTRTPTLFGGEENPPLSVYDTSGPYTDPRVAIDLAAGLAPLRAQWIAERGDTLALDGLSSSFGRGREHDARLDAVRFPARRLPRVARQGANVTQMHYARRGIITPEMEYVAIRENQRLEAVTDASLRKQHPGQAFGASIQQRITPEFVREEIARGRAILPNNINHPESEPMIIGRNFLTKINANIGNSAVSSGIAEEVEKLVWSIRWGGDTVMDLSTGKHIHETREWIIRNSPVPIGTVPIYQALEKVDGRAEELTWDIFRDTLIEQAEQGVDYFTIHAGVLLRYVPLTAKRVTGIVSRGGSIMAKWCLAHHKENFLYTHFEDICQIMKAYDVAFSLGDGLRPGCIADANDAAQFGELETLGELTKLAWQHDVQTMIEGPGHVPMQLIKENMDKQLRECGEAPFYTLGPLTTDIAPGYDHITSAIGAAMIGWFGTAMLCYVTPKEHLGLPNRQDVRDGIMAYKIAAHAADLAKGHPGAQVRDNALSKARFEFRWDDQFHLGLDPEKAKEFHDETLPKDAHKLAHFCSMCGPHFCSMKITQDVRDYANEHGVSEAQALSTGMQEKSAQFVAQGAQVYRAT.

Residues Asn230, Met259, Tyr288, His324, 344-346 (SRG), 385-388 (DGLR), and Glu424 contribute to the substrate site. His428 contributes to the Zn(2+) binding site. Tyr451 is a substrate binding site. His492 contacts Zn(2+). The [4Fe-4S] cluster site is built by Cys572, Cys575, and Cys580.

This sequence belongs to the ThiC family. Homodimer. Requires [4Fe-4S] cluster as cofactor.

It catalyses the reaction 5-amino-1-(5-phospho-beta-D-ribosyl)imidazole + S-adenosyl-L-methionine = 4-amino-2-methyl-5-(phosphooxymethyl)pyrimidine + CO + 5'-deoxyadenosine + formate + L-methionine + 3 H(+). The protein operates within cofactor biosynthesis; thiamine diphosphate biosynthesis. Its function is as follows. Catalyzes the synthesis of the hydroxymethylpyrimidine phosphate (HMP-P) moiety of thiamine from aminoimidazole ribotide (AIR) in a radical S-adenosyl-L-methionine (SAM)-dependent reaction. The protein is Phosphomethylpyrimidine synthase of Xanthomonas axonopodis pv. citri (strain 306).